Here is a 277-residue protein sequence, read N- to C-terminus: S-formylglutathione hydrolase FrmB (277 aa).

Residues Ser-145, Asp-221, and His-254 each act as charge relay system in the active site.

This sequence belongs to the esterase D family.

It catalyses the reaction S-formylglutathione + H2O = formate + glutathione + H(+). Its function is as follows. Serine hydrolase involved in the detoxification of formaldehyde. Hydrolyzes S-formylglutathione to glutathione and formate. In Escherichia coli O6:K15:H31 (strain 536 / UPEC), this protein is S-formylglutathione hydrolase FrmB (frmB).